The following is a 101-amino-acid chain: Small ribosomal subunit protein uS14 (101 aa).

A disordered region spans residues 49-70 (QSLPRDSSPSRQRNRCNQTGRP). Residues 52–68 (PRDSSPSRQRNRCNQTG) are compositionally biased toward polar residues.

This sequence belongs to the universal ribosomal protein uS14 family. Part of the 30S ribosomal subunit. Contacts proteins S3 and S10.

In terms of biological role, binds 16S rRNA, required for the assembly of 30S particles and may also be responsible for determining the conformation of the 16S rRNA at the A site. The protein is Small ribosomal subunit protein uS14 of Yersinia pseudotuberculosis serotype O:1b (strain IP 31758).